We begin with the raw amino-acid sequence, 85 residues long: Large ribosomal subunit protein bL27 (85 aa).

Residues 1–22 are disordered; it reads MAHKKGQGSSRNGRDSPGQHRG.

Belongs to the bacterial ribosomal protein bL27 family.

This is Large ribosomal subunit protein bL27 from Anaeromyxobacter sp. (strain Fw109-5).